The chain runs to 337 residues: Eukaryotic translation initiation factor 3 subunit H (337 aa).

One can recognise an MPN domain in the interval 21-153; sequence VQCDGLAVMK…LKAYRLTPQA (133 aa).

This sequence belongs to the eIF-3 subunit H family. As to quaternary structure, component of the eukaryotic translation initiation factor 3 (eIF-3) complex. The eIF-3 complex interacts with pix. Interacts with mxt.

Its subcellular location is the cytoplasm. Its function is as follows. Component of the eukaryotic translation initiation factor 3 (eIF-3) complex, which is involved in protein synthesis of a specialized repertoire of mRNAs and, together with other initiation factors, stimulates binding of mRNA and methionyl-tRNAi to the 40S ribosome. The eIF-3 complex specifically targets and initiates translation of a subset of mRNAs involved in cell proliferation. The protein is Eukaryotic translation initiation factor 3 subunit H of Drosophila grimshawi (Hawaiian fruit fly).